A 225-amino-acid polypeptide reads, in one-letter code: UPF0758 protein Vapar_4033 (225 aa).

Residues 103 to 225 (VFDSPGTVKQ…SYSMAEKGLL (123 aa)) form the MPN domain. Positions 174, 176, and 187 each coordinate Zn(2+). The JAMM motif motif lies at 174-187 (HNHPSGSIEPSRAD).

It belongs to the UPF0758 family.

The chain is UPF0758 protein Vapar_4033 from Variovorax paradoxus (strain S110).